The following is a 373-amino-acid chain: Putative zinc finger protein 012R (373 aa).

The C2H2-type zinc finger occupies 2 to 29; that stretch reads FECTHCDLHFESKSKLATHQKTKKCTAH.

The protein belongs to the IIV-6 302L family.

This chain is Putative zinc finger protein 012R, found in Invertebrate iridescent virus 3 (IIV-3).